The primary structure comprises 232 residues: tRNA1(Val) (adenine(37)-N6)-methyltransferase (232 aa).

The protein belongs to the methyltransferase superfamily. tRNA (adenine-N(6)-)-methyltransferase family.

The protein localises to the cytoplasm. It carries out the reaction adenosine(37) in tRNA1(Val) + S-adenosyl-L-methionine = N(6)-methyladenosine(37) in tRNA1(Val) + S-adenosyl-L-homocysteine + H(+). Its function is as follows. Specifically methylates the adenine in position 37 of tRNA(1)(Val) (anticodon cmo5UAC). This chain is tRNA1(Val) (adenine(37)-N6)-methyltransferase, found in Pseudoalteromonas translucida (strain TAC 125).